A 207-amino-acid chain; its full sequence is NADH-quinone oxidoreductase subunit A (207 aa).

3 helical membrane passes run 6–26 (LSAIAFILAAIGLVVFMLVVP), 62–82 (LVAIFFVIFDLEALYLYAYAV), and 87–107 (AGWLGFAAAAIFITILIIGLV).

Belongs to the complex I subunit 3 family. In terms of assembly, NDH-1 is composed of 14 different subunits. Subunits NuoA, H, J, K, L, M, N constitute the membrane sector of the complex.

The protein localises to the cell inner membrane. It carries out the reaction a quinone + NADH + 5 H(+)(in) = a quinol + NAD(+) + 4 H(+)(out). In terms of biological role, NDH-1 shuttles electrons from NADH, via FMN and iron-sulfur (Fe-S) centers, to quinones in the respiratory chain. The immediate electron acceptor for the enzyme in this species is believed to be ubiquinone. Couples the redox reaction to proton translocation (for every two electrons transferred, four hydrogen ions are translocated across the cytoplasmic membrane), and thus conserves the redox energy in a proton gradient. The polypeptide is NADH-quinone oxidoreductase subunit A (Psychrobacter cryohalolentis (strain ATCC BAA-1226 / DSM 17306 / VKM B-2378 / K5)).